Here is a 160-residue protein sequence, read N- to C-terminus: Single-stranded DNA-binding protein 3 (160 aa).

The 103-residue stretch at methionine 2–glutamate 104 folds into the SSB domain. Positions lysine 106–tyrosine 133 are enriched in polar residues. The disordered stretch occupies residues lysine 106–phenylalanine 160.

In terms of assembly, homotetramer.

The chain is Single-stranded DNA-binding protein 3 (ssb3) from Listeria innocua serovar 6a (strain ATCC BAA-680 / CLIP 11262).